A 642-amino-acid chain; its full sequence is Threonine--tRNA ligase (642 aa).

Positions 1–61 constitute a TGS domain; that stretch reads MPVITLPDGS…ENDAQLSIIT (61 aa). The interval 243–534 is catalytic; sequence DHRKIGKQLD…LTEEFAGFFP (292 aa). K286 bears the N6-acetyllysine mark. Residues C334, H385, and H511 each coordinate Zn(2+).

The protein belongs to the class-II aminoacyl-tRNA synthetase family. Homodimer. Requires Zn(2+) as cofactor.

It is found in the cytoplasm. It carries out the reaction tRNA(Thr) + L-threonine + ATP = L-threonyl-tRNA(Thr) + AMP + diphosphate + H(+). Functionally, catalyzes the attachment of threonine to tRNA(Thr) in a two-step reaction: L-threonine is first activated by ATP to form Thr-AMP and then transferred to the acceptor end of tRNA(Thr). Also edits incorrectly charged L-seryl-tRNA(Thr). This chain is Threonine--tRNA ligase, found in Escherichia coli O8 (strain IAI1).